The sequence spans 221 residues: Flavin-dependent thymidylate synthase (221 aa).

The 201-residue stretch at 9–209 folds into the ThyX domain; sequence GFVKLLDHMG…PWTYESFIRY (201 aa). FAD contacts are provided by residues Ser55, 78 to 80, and Glu86; that span reads RHR. DUMP contacts are provided by residues 75 to 78, 86 to 90, and Arg148; these read QWMR and ELSGR. The short motif at 78 to 88 is the ThyX motif element; that stretch reads RHRIASYNELS. FAD is bound by residues 164–166 and Asn170; that span reads NAR. A dUMP-binding site is contributed by Arg175. Residue Arg175 is the Involved in ionization of N3 of dUMP, leading to its activation of the active site.

The protein belongs to the thymidylate synthase ThyX family. As to quaternary structure, homotetramer. FAD is required as a cofactor.

It catalyses the reaction dUMP + (6R)-5,10-methylene-5,6,7,8-tetrahydrofolate + NADPH + H(+) = dTMP + (6S)-5,6,7,8-tetrahydrofolate + NADP(+). It functions in the pathway pyrimidine metabolism; dTTP biosynthesis. Functionally, catalyzes the reductive methylation of 2'-deoxyuridine-5'-monophosphate (dUMP) to 2'-deoxythymidine-5'-monophosphate (dTMP) while utilizing 5,10-methylenetetrahydrofolate (mTHF) as the methyl donor, and NADPH and FADH(2) as the reductant. This chain is Flavin-dependent thymidylate synthase, found in Pseudothermotoga lettingae (strain ATCC BAA-301 / DSM 14385 / NBRC 107922 / TMO) (Thermotoga lettingae).